The sequence spans 398 residues: Phosphoglycerate kinase (398 aa).

Residues 23-25 (DFN), Arg-38, 61-64 (HMGK), Arg-122, and Arg-155 contribute to the substrate site. Residues Lys-206, Gly-297, Glu-328, and 354–357 (GGDS) each bind ATP.

This sequence belongs to the phosphoglycerate kinase family. In terms of assembly, monomer.

The protein resides in the cytoplasm. The enzyme catalyses (2R)-3-phosphoglycerate + ATP = (2R)-3-phospho-glyceroyl phosphate + ADP. It functions in the pathway carbohydrate degradation; glycolysis; pyruvate from D-glyceraldehyde 3-phosphate: step 2/5. In Clostridium botulinum (strain Loch Maree / Type A3), this protein is Phosphoglycerate kinase.